Here is a 340-residue protein sequence, read N- to C-terminus: Cytochrome P450 monooxygenase cheG (340 aa).

N25 is a glycosylation site (N-linked (GlcNAc...) asparagine). Residues 37–57 traverse the membrane as a helical segment; it reads MLLGIPTVILSLTPAVLRLLI. Heme is bound at residue C283. A disordered region spans residues 308-340; it reads LPPGQGKPEKGSMPNGSMSPDTKAKVLFRSRKL. N322 carries N-linked (GlcNAc...) asparagine glycosylation.

This sequence belongs to the cytochrome P450 family. Heme is required as a cofactor.

It localises to the membrane. It participates in secondary metabolite biosynthesis. In terms of biological role, cytochrome P450 monooxygenase; part of the gene cluster that mediates the biosynthesis of chaetoglobosin A which has a unique inhibitory activity against actin polymerization in mammalian cells. Chaetoglobosin A and its intermediates are involved in the morphological differentiation of C.globosum. The first step of the pathway is the synthesis of prochaetoglobosin I via condensation of one acetyl-CoA, 8 malonyl-CoA, and a L-tryptophan molecule by the PKS-NRPS hybrid synthetase cheA, followed by reduction of backbone double bond to install desired geometry by the enoyl reductase cheB. Further multiple oxidation steps performed by the cytochrome P450 monooxygenases cheE and cheG, as well as by the FAD-linked oxidoreductase cheF, lead to the formation of chaetoglobosin A. Depending on the order of action of these reductases, distinct intermediates can be identified. Within the pathway, the cytochrome P450 monooxygenase cheE catalyzes a stereospecific epoxidation on prochaetoglobosin I, cytoglobosin D, and chaetoglobosin J intermediates. The FAD-linked oxidoreductase cheF performs dehydrogenation of the C-20 hydroxyl groups in the 20-dihyrochaetoglobosin A and cytoglobosin D intermediates. Finally, the cytochrome P450 monooxygenase cheG can catalyze the stereospecific dihydroxylation of prochaetoglobosin I and prochaetoglobosin IV at C-19 and C-20, respectively. The Diels-Alderase cheD may play a role in the post-PKS-NRPS biosynthetic steps catalyzing Diels-Alder cyclization. The sequence is that of Cytochrome P450 monooxygenase cheG from Chaetomium globosum (strain ATCC 6205 / CBS 148.51 / DSM 1962 / NBRC 6347 / NRRL 1970) (Soil fungus).